The primary structure comprises 50 residues: Large ribosomal subunit protein eL39 (50 aa).

Basic residues predominate over residues 1-12; sequence MGKKSKASKKRL. 2 disordered regions span residues 1 to 20 and 30 to 50; these read MGKKSKASKKRLAKLERQNS and TNRDVQRNPKRRNWRRNDTDE.

This sequence belongs to the eukaryotic ribosomal protein eL39 family.

The sequence is that of Large ribosomal subunit protein eL39 (rpl39e) from Halobacterium salinarum (strain ATCC 700922 / JCM 11081 / NRC-1) (Halobacterium halobium).